The following is a 206-amino-acid chain: Probable glutathione S-transferase 6 (206 aa).

The region spanning 2 to 79 (VHYKLVYFPL…YLAREFGIAG (78 aa)) is the GST N-terminal domain. Glutathione contacts are provided by residues Y8, W39, K43, 49–51 (GQL), and 63–64 (QS). The 126-residue stretch at 81 to 206 (NDTEAAEVDA…YIANRPDYPF (126 aa)) folds into the GST C-terminal domain.

The protein belongs to the GST superfamily. Sigma family.

It catalyses the reaction RX + glutathione = an S-substituted glutathione + a halide anion + H(+). Conjugation of reduced glutathione to a wide number of exogenous and endogenous hydrophobic electrophiles. The polypeptide is Probable glutathione S-transferase 6 (gst-6) (Caenorhabditis elegans).